Consider the following 132-residue polypeptide: Small ribosomal subunit protein uS8 (132 aa).

It belongs to the universal ribosomal protein uS8 family. Part of the 30S ribosomal subunit. Contacts proteins S5 and S12.

In terms of biological role, one of the primary rRNA binding proteins, it binds directly to 16S rRNA central domain where it helps coordinate assembly of the platform of the 30S subunit. This is Small ribosomal subunit protein uS8 from Mycoplasmopsis synoviae (strain 53) (Mycoplasma synoviae).